Consider the following 204-residue polypeptide: Probable nicotinate-nucleotide adenylyltransferase (204 aa).

The protein belongs to the NadD family.

It carries out the reaction nicotinate beta-D-ribonucleotide + ATP + H(+) = deamido-NAD(+) + diphosphate. Its pathway is cofactor biosynthesis; NAD(+) biosynthesis; deamido-NAD(+) from nicotinate D-ribonucleotide: step 1/1. Catalyzes the reversible adenylation of nicotinate mononucleotide (NaMN) to nicotinic acid adenine dinucleotide (NaAD). This is Probable nicotinate-nucleotide adenylyltransferase from Dehalococcoides mccartyi (strain CBDB1).